A 255-amino-acid polypeptide reads, in one-letter code: Type III pantothenate kinase (255 aa).

Residue 7-14 coordinates ATP; it reads DVGNTRLK. Substrate contacts are provided by residues tyrosine 96 and 103–106; that span reads GADR. The active-site Proton acceptor is the aspartate 105. ATP is bound at residue threonine 133. Threonine 183 is a binding site for substrate.

The protein belongs to the type III pantothenate kinase family. Homodimer. It depends on NH4(+) as a cofactor. Requires K(+) as cofactor.

It localises to the cytoplasm. It carries out the reaction (R)-pantothenate + ATP = (R)-4'-phosphopantothenate + ADP + H(+). The protein operates within cofactor biosynthesis; coenzyme A biosynthesis; CoA from (R)-pantothenate: step 1/5. Functionally, catalyzes the phosphorylation of pantothenate (Pan), the first step in CoA biosynthesis. This Albidiferax ferrireducens (strain ATCC BAA-621 / DSM 15236 / T118) (Rhodoferax ferrireducens) protein is Type III pantothenate kinase.